The primary structure comprises 229 residues: Small ribosomal subunit protein mS23 (229 aa).

This sequence belongs to the mitochondrion-specific ribosomal protein mS23 family. In terms of assembly, component of the mitochondrial small ribosomal subunit.

The protein resides in the mitochondrion. The polypeptide is Small ribosomal subunit protein mS23 (RSM25) (Yarrowia lipolytica (strain CLIB 122 / E 150) (Yeast)).